The following is a 246-amino-acid chain: Octanoyltransferase (246 aa).

Residues 46–234 form the BPL/LPL catalytic domain; that stretch reads GTAGEMVWLV…AFEEVFGAAE (189 aa). Residues 85–92, 165–167, and 178–180 each bind substrate; these read RGGEYTYH, AIG, and GIA. Catalysis depends on Cys196, which acts as the Acyl-thioester intermediate.

This sequence belongs to the LipB family.

It localises to the cytoplasm. It catalyses the reaction octanoyl-[ACP] + L-lysyl-[protein] = N(6)-octanoyl-L-lysyl-[protein] + holo-[ACP] + H(+). It participates in protein modification; protein lipoylation via endogenous pathway; protein N(6)-(lipoyl)lysine from octanoyl-[acyl-carrier-protein]: step 1/2. In terms of biological role, catalyzes the transfer of endogenously produced octanoic acid from octanoyl-acyl-carrier-protein onto the lipoyl domains of lipoate-dependent enzymes. Lipoyl-ACP can also act as a substrate although octanoyl-ACP is likely to be the physiological substrate. The sequence is that of Octanoyltransferase from Chelativorans sp. (strain BNC1).